A 509-amino-acid polypeptide reads, in one-letter code: Heat shock 70 kDa protein 14 (509 aa).

Belongs to the heat shock protein 70 family. In terms of assembly, component of ribosome-associated complex (RAC), a heterodimer composed of Hsp70/DnaK-type chaperone HSPA14 and Hsp40/DnaJ-type chaperone DNAJC2.

It localises to the cytoplasm. Its subcellular location is the cytosol. Component of the ribosome-associated complex (RAC), a complex involved in folding or maintaining nascent polypeptides in a folding-competent state. In the RAC complex, binds to the nascent polypeptide chain, while DNAJC2 stimulates its ATPase activity. In Mus musculus (Mouse), this protein is Heat shock 70 kDa protein 14 (Hspa14).